A 445-amino-acid chain; its full sequence is tRNA(Ile2) 2-agmatinylcytidine synthetase TiaS (445 aa).

Positions Val-278–Tyr-349 form a DNA-binding region, OB.

Belongs to the TiaS family.

The protein localises to the cytoplasm. The enzyme catalyses cytidine(34) in tRNA(Ile2) + agmatine + ATP + H2O = 2-agmatinylcytidine(34) in tRNA(Ile2) + AMP + 2 phosphate + 2 H(+). Functionally, ATP-dependent agmatine transferase that catalyzes the formation of 2-agmatinylcytidine (agm2C) at the wobble position (C34) of tRNA(Ile2), converting the codon specificity from AUG to AUA. This chain is tRNA(Ile2) 2-agmatinylcytidine synthetase TiaS, found in Thermofilum pendens (strain DSM 2475 / Hrk 5).